The primary structure comprises 209 residues: Small ribosomal subunit protein mS23 (209 aa).

Belongs to the mitochondrion-specific ribosomal protein mS23 family. As to quaternary structure, component of the mitochondrial small ribosomal subunit.

It localises to the mitochondrion. In Sclerotinia sclerotiorum (strain ATCC 18683 / 1980 / Ss-1) (White mold), this protein is Small ribosomal subunit protein mS23 (rsm25).